Consider the following 452-residue polypeptide: Pre-mRNA-splicing factor prp46 (452 aa).

A compositionally biased stretch (low complexity) spans 61 to 70 (AAKQAQAAAA). Residues 61–129 (AAKQAQAAAA…SATRQQPPEW (69 aa)) are disordered. Residues 114–125 (SLIQRPSATRQQ) are compositionally biased toward polar residues. WD repeat units follow at residues 141-180 (GHLG…LRLT), 183-222 (GHIS…VIRH), 225-264 (GHLS…NIHV), 267-308 (GHTG…GVLT), 310-349 (HKKG…QNFE), 350-388 (GHNA…RYQT), and 399-438 (EAEA…TPET). Positions 432–452 (DQATPETHPVTWAPTLGRQRY) are disordered.

The protein belongs to the WD repeat PRL1/PRL2 family. As to quaternary structure, associated with the spliceosome.

The protein localises to the cytoplasm. The protein resides in the nucleus. Its function is as follows. Involved in pre-mRNA splicing and required for cell cycle progression at G2/M. The polypeptide is Pre-mRNA-splicing factor prp46 (prp46) (Emericella nidulans (strain FGSC A4 / ATCC 38163 / CBS 112.46 / NRRL 194 / M139) (Aspergillus nidulans)).